The sequence spans 249 residues: Type III pantothenate kinase (249 aa).

Position 8-15 (Asp8–Lys15) interacts with ATP. Residues Tyr95 and Gly102–Arg105 contribute to the substrate site. The Proton acceptor role is filled by Asp104. Asp125 is a binding site for K(+). Thr128 is a binding site for ATP. Thr179 contacts substrate.

This sequence belongs to the type III pantothenate kinase family. Homodimer. NH4(+) is required as a cofactor. Requires K(+) as cofactor.

It is found in the cytoplasm. The enzyme catalyses (R)-pantothenate + ATP = (R)-4'-phosphopantothenate + ADP + H(+). Its pathway is cofactor biosynthesis; coenzyme A biosynthesis; CoA from (R)-pantothenate: step 1/5. In terms of biological role, catalyzes the phosphorylation of pantothenate (Pan), the first step in CoA biosynthesis. The chain is Type III pantothenate kinase from Alkalilimnicola ehrlichii (strain ATCC BAA-1101 / DSM 17681 / MLHE-1).